A 112-amino-acid polypeptide reads, in one-letter code: Large ribosomal subunit protein bL17 (112 aa).

The protein belongs to the bacterial ribosomal protein bL17 family. As to quaternary structure, part of the 50S ribosomal subunit. Contacts protein L32.

The polypeptide is Large ribosomal subunit protein bL17 (Desulforudis audaxviator (strain MP104C)).